The sequence spans 213 residues: Protein GrpE (213 aa).

The segment at 1 to 61 (MEQGEKQVME…AEKAPTAEEL (61 aa)) is disordered. Residues 13–35 (TYDEPEREQPIEEEAAPQPEEES) are compositionally biased toward acidic residues.

This sequence belongs to the GrpE family. Homodimer.

It is found in the cytoplasm. In terms of biological role, participates actively in the response to hyperosmotic and heat shock by preventing the aggregation of stress-denatured proteins, in association with DnaK and GrpE. It is the nucleotide exchange factor for DnaK and may function as a thermosensor. Unfolded proteins bind initially to DnaJ; upon interaction with the DnaJ-bound protein, DnaK hydrolyzes its bound ATP, resulting in the formation of a stable complex. GrpE releases ADP from DnaK; ATP binding to DnaK triggers the release of the substrate protein, thus completing the reaction cycle. Several rounds of ATP-dependent interactions between DnaJ, DnaK and GrpE are required for fully efficient folding. This is Protein GrpE from Geobacillus kaustophilus (strain HTA426).